Consider the following 548-residue polypeptide: Glucose-6-phosphate isomerase (548 aa).

Catalysis depends on E355, which acts as the Proton donor. Active-site residues include H386 and K514.

The protein belongs to the GPI family.

It is found in the cytoplasm. It carries out the reaction alpha-D-glucose 6-phosphate = beta-D-fructose 6-phosphate. Its pathway is carbohydrate biosynthesis; gluconeogenesis. It functions in the pathway carbohydrate degradation; glycolysis; D-glyceraldehyde 3-phosphate and glycerone phosphate from D-glucose: step 2/4. Functionally, catalyzes the reversible isomerization of glucose-6-phosphate to fructose-6-phosphate. In Proteus mirabilis (strain HI4320), this protein is Glucose-6-phosphate isomerase.